Consider the following 256-residue polypeptide: Alcohol dehydrogenase (256 aa).

N-acetylserine is present on Ser2. NAD(+) is bound by residues 12 to 41 and Asp65; that span reads FVAGLGGIGLDTSKELLKRDLKNLVILDRI. Substrate is bound at residue Ser140. The active-site Proton acceptor is the Tyr153. Lys157 is a binding site for NAD(+).

Belongs to the short-chain dehydrogenases/reductases (SDR) family. In terms of assembly, homodimer.

The catalysed reaction is a primary alcohol + NAD(+) = an aldehyde + NADH + H(+). The enzyme catalyses a secondary alcohol + NAD(+) = a ketone + NADH + H(+). Inhibited by 2,2,2-trifluoroethanol and pyrazole. This is Alcohol dehydrogenase (Adh) from Drosophila melanogaster (Fruit fly).